An 83-amino-acid chain; its full sequence is Small ribosomal subunit protein eS21 (83 aa).

At Met1 the chain carries N-acetylmethionine. Residue Lys41 forms a Glycyl lysine isopeptide (Lys-Gly) (interchain with G-Cter in SUMO2) linkage. Position 81 is an N6-acetyllysine (Lys81).

Belongs to the eukaryotic ribosomal protein eS21 family. As to quaternary structure, component of the 40S small ribosomal subunit.

The protein resides in the cytoplasm. Its subcellular location is the cytosol. It is found in the rough endoplasmic reticulum. Its function is as follows. Component of the small ribosomal subunit. The ribosome is a large ribonucleoprotein complex responsible for the synthesis of proteins in the cell. This Sus scrofa (Pig) protein is Small ribosomal subunit protein eS21 (RPS21).